A 221-amino-acid polypeptide reads, in one-letter code: Urease accessory protein UreE (221 aa).

The tract at residues Val-160–Lys-194 is disordered. A compositionally biased stretch (basic and acidic residues) spans Thr-177–Lys-194.

This sequence belongs to the UreE family.

The protein localises to the cytoplasm. Its function is as follows. Involved in urease metallocenter assembly. Binds nickel. Probably functions as a nickel donor during metallocenter assembly. This Bifidobacterium longum subsp. infantis (strain ATCC 15697 / DSM 20088 / JCM 1222 / NCTC 11817 / S12) protein is Urease accessory protein UreE.